Reading from the N-terminus, the 707-residue chain is Alpha-hemolysin translocation ATP-binding protein HlyB (707 aa).

A Peptidase C39 domain is found at 3 to 125 (SCHKIDYGLY…ALYQGHIILI (123 aa)). Residue His-83 is part of the active site. In terms of domain architecture, ABC transmembrane type-1 spans 154–436 (FIETLVVSVF…LAQIWQDFQQ (283 aa)). Helical transmembrane passes span 158–178 (LVVS…FQVV), 191–211 (LNVI…LSGL), 269–289 (ALTS…MWYY), 295–315 (LVIL…SPIL), and 388–408 (VMII…LSIG). One can recognise an ABC transporter domain in the interval 468-703 (ITFRNIRFRY…PESLYSYLYQ (236 aa)). ATP is bound at residue 502–509 (GRSGSGKS).

The protein belongs to the ABC transporter superfamily. Protein-1 exporter (TC 3.A.1.109) family. In terms of assembly, homodimer.

It localises to the cell inner membrane. Its function is as follows. Part of the ABC transporter complex HlyBD involved in hemolysin export. Transmembrane domains (TMD) form a pore in the inner membrane and the ATP-binding domain (NBD) is responsible for energy generation. The protein is Alpha-hemolysin translocation ATP-binding protein HlyB (hlyB) of Escherichia coli.